The following is a 148-amino-acid chain: SsrA-binding protein (148 aa).

Positions 123–148 are disordered; the sequence is KLHDKRETEKKRDWEREKARIMRSAT. Residues 126–142 are compositionally biased toward basic and acidic residues; the sequence is DKRETEKKRDWEREKAR.

This sequence belongs to the SmpB family.

The protein resides in the cytoplasm. In terms of biological role, required for rescue of stalled ribosomes mediated by trans-translation. Binds to transfer-messenger RNA (tmRNA), required for stable association of tmRNA with ribosomes. tmRNA and SmpB together mimic tRNA shape, replacing the anticodon stem-loop with SmpB. tmRNA is encoded by the ssrA gene; the 2 termini fold to resemble tRNA(Ala) and it encodes a 'tag peptide', a short internal open reading frame. During trans-translation Ala-aminoacylated tmRNA acts like a tRNA, entering the A-site of stalled ribosomes, displacing the stalled mRNA. The ribosome then switches to translate the ORF on the tmRNA; the nascent peptide is terminated with the 'tag peptide' encoded by the tmRNA and targeted for degradation. The ribosome is freed to recommence translation, which seems to be the essential function of trans-translation. The polypeptide is SsrA-binding protein (Burkholderia pseudomallei (strain 1710b)).